We begin with the raw amino-acid sequence, 122 residues long: Mating-type protein A1 (122 aa).

The homeobox DNA-binding region spans 62 to 121 (NHKRGCNIDKKTKDMLNKVYEQKQYLTKEEREFVAKKCNLTPLQVRVWFANKRIRNKNTK).

The protein belongs to the MATA1 family. As to quaternary structure, forms a heterodimer with ALPHA2.

It is found in the nucleus. In terms of biological role, mating type proteins are sequence specific DNA-binding proteins that act as master switches in yeast differentiation by controlling gene expression in a cell type-specific fashion. Transcriptional corepressor that acts in conjunction with ALPHA2 to repress transcription of haploid-specific genes and of MATALPHA1. This Nakaseomyces delphensis (Yeast) protein is Mating-type protein A1 (MATA1).